A 292-amino-acid chain; its full sequence is ATP synthase gamma chain (292 aa).

The protein belongs to the ATPase gamma chain family. F-type ATPases have 2 components, CF(1) - the catalytic core - and CF(0) - the membrane proton channel. CF(1) has five subunits: alpha(3), beta(3), gamma(1), delta(1), epsilon(1). CF(0) has three main subunits: a, b and c.

The protein resides in the cell inner membrane. In terms of biological role, produces ATP from ADP in the presence of a proton gradient across the membrane. The gamma chain is believed to be important in regulating ATPase activity and the flow of protons through the CF(0) complex. This is ATP synthase gamma chain from Methylobacterium sp. (strain 4-46).